Here is a 292-residue protein sequence, read N- to C-terminus: 4-hydroxybenzoate octaprenyltransferase (292 aa).

Helical transmembrane passes span 20–40 (IGILLLLWPTLWGLWLAADGM), 43–63 (PMILVIFILGTILMRSAGCAI), 94–114 (LLIAAGLSLCAFLLILPLNLL), 135–155 (FFAMPQAYLGIAFSFGIPMAF), 160–180 (GTVPPLAWLLVLANLFWVIAY), 209–229 (VAGILLCHIIFLSTLTYAGIL), 234–254 (IWFYGALLVALGLVIVQYGMI), and 266–286 (FLHNNWIGAVIFAGILLDTLF).

It belongs to the UbiA prenyltransferase family. Requires Mg(2+) as cofactor.

Its subcellular location is the cell inner membrane. The catalysed reaction is all-trans-octaprenyl diphosphate + 4-hydroxybenzoate = 4-hydroxy-3-(all-trans-octaprenyl)benzoate + diphosphate. It functions in the pathway cofactor biosynthesis; ubiquinone biosynthesis. Functionally, catalyzes the prenylation of para-hydroxybenzoate (PHB) with an all-trans polyprenyl group. Mediates the second step in the final reaction sequence of ubiquinone-8 (UQ-8) biosynthesis, which is the condensation of the polyisoprenoid side chain with PHB, generating the first membrane-bound Q intermediate 3-octaprenyl-4-hydroxybenzoate. In Nitrosomonas europaea (strain ATCC 19718 / CIP 103999 / KCTC 2705 / NBRC 14298), this protein is 4-hydroxybenzoate octaprenyltransferase.